Here is a 1429-residue protein sequence, read N- to C-terminus: Probable ATP-dependent RNA helicase spindle-E (1429 aa).

In terms of domain architecture, Helicase ATP-binding spans 121 to 288 (VNAINTHQVV…FSTKVSVPPV (168 aa)). 134 to 141 (GETGCGKT) is a binding site for ATP. The DEAH box motif lies at 234-237 (DEVH). A Helicase C-terminal domain is found at 349-521 (QSEQSYDDAK…NSVLKAKLLD (173 aa)). Positions 933 to 996 (AGVLTKGMMV…RLMTKELLSQ (64 aa)) constitute a Tudor domain.

It belongs to the DEAD box helicase family. DEAH subfamily.

It is found in the cytoplasm. It carries out the reaction ATP + H2O = ADP + phosphate + H(+). In terms of biological role, probable ATP-binding RNA helicase which plays a central role during spermatogenesis and oogenesis by repressing transposable elements and preventing their mobilization, which is essential for the germline integrity. Acts via the piRNA metabolic process, which mediates the repression of transposable elements during meiosis by forming complexes composed of piRNAs and Piwi and govern the methylation and subsequent repression of transposons. Involved in the repression of LTR retrotransposon copia. Also involved in telomere regulation by repressing specialized telomeric retroelements HeT-A, TAHRE, and TART; Drosophila telomeres being maintained by transposition of specialized telomeric retroelements. Involved in telomeric trans-silencing, a repression mechanism by which a transposon or a transgene inserted in subtelomeric heterochromatin has the capacity to repress in trans in the female germline, a homologous transposon, or transgene located in euchromatin. Involved in the repression of testis-expressed Stellate genes by the homologous Su(Ste) repeats. Required for anteroposterior and dorsoventral axis formation during oogenesis. This chain is Probable ATP-dependent RNA helicase spindle-E (spn-E), found in Drosophila ananassae (Fruit fly).